The primary structure comprises 317 residues: MNPESRVIRKVLALQNDEKIFSGERRVLIAFSGGVDSVVLTDVLLKLKNYFSLKEVALAHFNHMLRESAERDEEFCKEFAKERNMKIFVGKEDVRAFAKENRMSLEEAGRFLRYKFLKEILESEGFDCIATAHHLNDLLETSLLFFTRGTGLDGLIGFLPKEEVIRRPLYYVKRSEIEEYAKFKGLRWVEDETNYEVSIPRNRIRHRVIPELKRINENLEDTFLKMVKVLRAEREFLEEEAQKLYKEVKKGNCLDVKKLKEKPLALQRRVIRKFIGEKDYEKVELVRSLLEKGGEVNLGKGKVLKRKERWLCFSPEV.

32 to 37 (SGGVDS) is an ATP binding site.

It belongs to the tRNA(Ile)-lysidine synthase family.

The protein resides in the cytoplasm. The enzyme catalyses cytidine(34) in tRNA(Ile2) + L-lysine + ATP = lysidine(34) in tRNA(Ile2) + AMP + diphosphate + H(+). Ligates lysine onto the cytidine present at position 34 of the AUA codon-specific tRNA(Ile) that contains the anticodon CAU, in an ATP-dependent manner. Cytidine is converted to lysidine, thus changing the amino acid specificity of the tRNA from methionine to isoleucine. The chain is tRNA(Ile)-lysidine synthase from Aquifex aeolicus (strain VF5).